The sequence spans 274 residues: Cytochrome c oxidase subunit 3 (274 aa).

7 consecutive transmembrane segments (helical) span residues 22–42 (PSPWPLGASVACLILTLGGVM), 47–67 (FAAGDIGLPLGLILVLASMLL), 93–113 (GVVLFIVSEILLFFSLFWAFF), 137–157 (PFEVPLLNTIILLTSGCTITV), 170–190 (TILYLILTILLAWMFLGLQWV), 208–228 (FFVATGFHGLHVMIGTIFLTV), and 248–268 (AAIWYWHVVDVIWLFLYVSVY).

This sequence belongs to the cytochrome c oxidase subunit 3 family. Component of the cytochrome c oxidase (complex IV, CIV), a multisubunit enzyme composed of a catalytic core of 3 subunits and several supernumerary subunits. The complex exists as a monomer or a dimer and forms supercomplexes (SCs) in the inner mitochondrial membrane with ubiquinol-cytochrome c oxidoreductase (cytochrome b-c1 complex, complex III, CIII).

The protein localises to the mitochondrion inner membrane. It carries out the reaction 4 Fe(II)-[cytochrome c] + O2 + 8 H(+)(in) = 4 Fe(III)-[cytochrome c] + 2 H2O + 4 H(+)(out). Functionally, component of the cytochrome c oxidase, the last enzyme in the mitochondrial electron transport chain which drives oxidative phosphorylation. The respiratory chain contains 3 multisubunit complexes succinate dehydrogenase (complex II, CII), ubiquinol-cytochrome c oxidoreductase (cytochrome b-c1 complex, complex III, CIII) and cytochrome c oxidase (complex IV, CIV), that cooperate to transfer electrons derived from NADH and succinate to molecular oxygen, creating an electrochemical gradient over the inner membrane that drives transmembrane transport and the ATP synthase. Cytochrome c oxidase is the component of the respiratory chain that catalyzes the reduction of oxygen to water. Electrons originating from reduced cytochrome c in the intermembrane space (IMS) are transferred via the dinuclear copper A center (CU(A)) of subunit 2 and heme A of subunit 1 to the active site in subunit 1, a binuclear center (BNC) formed by heme A3 and copper B (CU(B)). The BNC reduces molecular oxygen to 2 water molecules using 4 electrons from cytochrome c in the IMS and 4 protons from the mitochondrial matrix. This is Cytochrome c oxidase subunit 3 (COX3) from Allomyces macrogynus.